We begin with the raw amino-acid sequence, 571 residues long: Adenine deaminase (571 aa).

The protein belongs to the metallo-dependent hydrolases superfamily. Adenine deaminase family. Mn(2+) serves as cofactor.

It carries out the reaction adenine + H2O + H(+) = hypoxanthine + NH4(+). This Dehalococcoides mccartyi (strain ATCC BAA-2100 / JCM 16839 / KCTC 5957 / BAV1) protein is Adenine deaminase.